The primary structure comprises 494 residues: Catalase isozyme 2 (494 aa).

A disordered region spans residues 1-29; the sequence is MDPCKFRPSSSFDTKTTTTNAGQPVWNDN. Positions 8 to 22 are enriched in polar residues; sequence PSSSFDTKTTTTNAG. Active-site residues include His-65 and Asn-138. Tyr-348 lines the heme pocket.

The protein belongs to the catalase family. In terms of assembly, homotetramer. It depends on heme as a cofactor.

Its subcellular location is the peroxisome. The protein resides in the glyoxysome. It catalyses the reaction 2 H2O2 = O2 + 2 H2O. In terms of biological role, occurs in almost all aerobically respiring organisms and serves to protect cells from the toxic effects of hydrogen peroxide. This Hordeum vulgare (Barley) protein is Catalase isozyme 2 (CAT2).